Consider the following 301-residue polypeptide: uncharacterized protein (301 aa).

Positions 1-28 (MFFREDKSVAFRLRSAALSGCATGQSDA) are cleaved as a signal peptide.

This is an uncharacterized protein from Treponema pallidum (strain Nichols).